The chain runs to 172 residues: Protein GrpE (172 aa).

It belongs to the GrpE family. As to quaternary structure, homodimer.

The protein localises to the cytoplasm. Its function is as follows. Participates actively in the response to hyperosmotic and heat shock by preventing the aggregation of stress-denatured proteins, in association with DnaK and GrpE. It is the nucleotide exchange factor for DnaK and may function as a thermosensor. Unfolded proteins bind initially to DnaJ; upon interaction with the DnaJ-bound protein, DnaK hydrolyzes its bound ATP, resulting in the formation of a stable complex. GrpE releases ADP from DnaK; ATP binding to DnaK triggers the release of the substrate protein, thus completing the reaction cycle. Several rounds of ATP-dependent interactions between DnaJ, DnaK and GrpE are required for fully efficient folding. The sequence is that of Protein GrpE from Thermotoga sp. (strain RQ2).